We begin with the raw amino-acid sequence, 477 residues long: MLGARRLLGALRLCSSVSCPRPRASAKMRVRDALRVQDARGECVTVQGWIRSVRSQKEVLFLHVNDGSSLESLQIVADSSFDSRELTFGSSVQVQGQLVKSQSKRQNVELKAEKIEVIGDCEAKAFPIKYKERHPLEYLRQYPHLRCRTNALGSILRVRSEATAAIHSYFKDNGFVHIHTPVLTSNDCEGAGELFQVEPSSKIKGPKESFFDVPAFLTVSGQLHLEVMSGAFTQVFTFGPTFRAENSQSRRHLAEFYMVEAEISFVESLQDLMQVMEELFKATTEMVLSHCPEDVELCHQFIAAGQKGRLEHMLKNNFLIISYTEAIEILKQASQNFAFTPKWGVDLQTEHEKYLVRHCGNIPVFVINYPSELKPFYMRENEDGPQNTVAAVDLLVPGVGELFGGSLREERYHVLEQRLARSGLTKAYQWYLDLRKFGSVPHGGFGMGFERYLQCILGVDNIKDVIPFPRFTHSCLL.

A mitochondrion-targeting transit peptide spans 1–14; sequence MLGARRLLGALRLC. N6-acetyllysine is present on lysine 353.

This sequence belongs to the class-II aminoacyl-tRNA synthetase family. Homodimer. Expressed in brain and inner ear, including the cochlear epithelium and organ of Corti.

Its subcellular location is the mitochondrion matrix. The protein localises to the mitochondrion. The enzyme catalyses tRNA(Asn) + L-asparagine + ATP = L-asparaginyl-tRNA(Asn) + AMP + diphosphate + H(+). Functionally, mitochondrial aminoacyl-tRNA synthetase that catalyzes the specific attachment of the asparagine amino acid (aa) to the homologous transfer RNA (tRNA), further participating in protein synthesis. The reaction occurs in a two steps: asparagine is first activated by ATP to form Asn-AMP and then transferred to the acceptor end of tRNA(Asn). This is Asparaginyl-tRNA synthetase from Mus musculus (Mouse).